The chain runs to 89 residues: Large ribosomal subunit protein eL34 (89 aa).

The tract at residues 1 to 22 is disordered; it reads MPAPRYKSGSSKKVYRKAPGNS.

It belongs to the eukaryotic ribosomal protein eL34 family.

The sequence is that of Large ribosomal subunit protein eL34 from Methanococcus maripaludis (strain DSM 14266 / JCM 13030 / NBRC 101832 / S2 / LL).